The sequence spans 203 residues: Urease accessory protein UreG (203 aa).

Residue 14-21 participates in GTP binding; the sequence is GPVGSGKT.

It belongs to the SIMIBI class G3E GTPase family. UreG subfamily. As to quaternary structure, homodimer. UreD, UreF and UreG form a complex that acts as a GTP-hydrolysis-dependent molecular chaperone, activating the urease apoprotein by helping to assemble the nickel containing metallocenter of UreC. The UreE protein probably delivers the nickel.

Its subcellular location is the cytoplasm. In terms of biological role, facilitates the functional incorporation of the urease nickel metallocenter. This process requires GTP hydrolysis, probably effectuated by UreG. This Rhizobium leguminosarum bv. viciae protein is Urease accessory protein UreG.